The chain runs to 687 residues: RNA-binding protein VTS1 (687 aa).

The span at 1 to 10 shows a compositional bias: basic residues; sequence MASHTLRPHR. 3 disordered regions span residues 1 to 115, 248 to 341, and 526 to 598; these read MASH…TPEA, AAAK…PGIG, and SPFN…AGVA. The span at 29-41 shows a compositional bias: polar residues; it reads TRQSLGPPTSGNS. Residues 52-68 are compositionally biased toward low complexity; sequence GLASPSSPSQPRHVSSS. The span at 287–301 shows a compositional bias: polar residues; the sequence is GLESNMSGRSRSKSP. A compositionally biased stretch (basic and acidic residues) spans 305-324; sequence PRPKSTDFSGKPRESLRRES. The span at 526-539 shows a compositional bias: polar residues; the sequence is SPFNASAPSLQPGL. A compositionally biased stretch (low complexity) spans 550–566; it reads QSSHLNQHYNQHQQQHQ. The segment covering 585–597 has biased composition (gly residues); it reads QTGGGGAGGGAGV. The region spanning 606-667 is the SAM domain; sequence KVLEDVPNWL…LKVFYNVRTK (62 aa).

It belongs to the VTS1 family. In terms of assembly, monomer. Binds to RNA.

It is found in the cytoplasm. It localises to the cytosol. The protein localises to the P-body. In terms of biological role, RNA-binding protein involved in post-transcriptional regulation through transcript degradation. This Cryptococcus neoformans var. grubii serotype A (strain H99 / ATCC 208821 / CBS 10515 / FGSC 9487) (Filobasidiella neoformans var. grubii) protein is RNA-binding protein VTS1.